An 850-amino-acid chain; its full sequence is cAMP-inducible prespore protein D7 (850 aa).

The signal sequence occupies residues 1 to 24; it reads MYSKKYTSFVIVLILSCIISTCTS. Low complexity predominate over residues 119–130; that stretch reads QNNNIGSSIGDS. Disordered regions lie at residues 119–167 and 787–850; these read QNNN…SKTT and DAEL…QNQK. Residues 131–143 show a composition bias toward polar residues; sequence TGASTSPQFQSIN. The span at 144–154 shows a compositional bias: low complexity; it reads GLSGASQSSGS. Positions 787–798 are enriched in basic and acidic residues; the sequence is DAELAKNNKQEN. Residues 801–820 are compositionally biased toward polar residues; that stretch reads ENLVQEKQQSPDQIKNQLKN. Residues 837 to 850 show a composition bias toward low complexity; that stretch reads EKNQQLLEQEQNQK.

This Dictyostelium discoideum (Social amoeba) protein is cAMP-inducible prespore protein D7 (D7).